We begin with the raw amino-acid sequence, 369 residues long: Omega-amidase, chloroplastic (369 aa).

The transit peptide at 1-63 directs the protein to the chloroplast; that stretch reads MKSAISSSLF…SALRSISSSM (63 aa). Position 64 is an N-acetylalanine (A64). In terms of domain architecture, CN hydrolase spans 88–337; that stretch reads FNIGLCQLSV…EAIIIAEIDY (250 aa). The Proton acceptor role is filled by E127. K201 functions as the Proton donor in the catalytic mechanism. Residue C242 is the Nucleophile of the active site.

It belongs to the nitrilase superfamily. NIT1/NIT2 family.

Its subcellular location is the plastid. It is found in the chloroplast. It carries out the reaction a monoamide of a dicarboxylate + H2O = a dicarboxylate + NH4(+). Functionally, omega-amidase involved in the metabolism of asparagine. Probably also closely coupled with glutamine transamination in the methionine salvage cycle. Can use alpha-ketosuccinamate and alpha-hydroxysuccinamate as substrates, producing respectively oxaloacetate and malate, or alpha-ketoglutaramate, producing alpha-ketoglutarate. The chain is Omega-amidase, chloroplastic from Arabidopsis thaliana (Mouse-ear cress).